Here is a 340-residue protein sequence, read N- to C-terminus: N-acetyl-gamma-glutamyl-phosphate reductase (340 aa).

Cysteine 149 is a catalytic residue.

This sequence belongs to the NAGSA dehydrogenase family. Type 1 subfamily.

It is found in the cytoplasm. It carries out the reaction N-acetyl-L-glutamate 5-semialdehyde + phosphate + NADP(+) = N-acetyl-L-glutamyl 5-phosphate + NADPH + H(+). It functions in the pathway amino-acid biosynthesis; L-arginine biosynthesis; N(2)-acetyl-L-ornithine from L-glutamate: step 3/4. Its function is as follows. Catalyzes the NADPH-dependent reduction of N-acetyl-5-glutamyl phosphate to yield N-acetyl-L-glutamate 5-semialdehyde. In Ruthia magnifica subsp. Calyptogena magnifica, this protein is N-acetyl-gamma-glutamyl-phosphate reductase.